A 58-amino-acid chain; its full sequence is Basic phospholipase A2 homolog PocTX (58 aa).

A disulfide bond links C29 and C45.

Expressed by the venom gland.

The protein localises to the secreted. Its function is as follows. Wasp venom phospholipase A2 homolog that lacks enzymatic activity. The chain is Basic phospholipase A2 homolog PocTX from Polybia occidentalis (Paper wasp).